The primary structure comprises 208 residues: Putative RING finger protein 413R (208 aa).

The disordered stretch occupies residues 1–87; it reads MDAIFYPLPI…RHWSDDDSDR (87 aa). Over residues 22 to 71 the composition is skewed to acidic residues; the sequence is DFQEEDFQEEDFQEEDFQEEDFQEEDEDEEDEEVNEYPSDLDDEYPDSDY. The span at 72–82 shows a compositional bias: basic and acidic residues; it reads YDERSDRHWSD. Residues 83–147 adopt a coiled-coil conformation; it reads DDSDRDLDDL…KLTTLSKNLT (65 aa). The RING-type zinc-finger motif lies at 148–196; the sequence is CIICLTNQVQILTIPCGHLIMCNPCSLNLNNSVCTRGVNSNYEKCPKCR.

The protein is Putative RING finger protein 413R (EF2) of Acheta domesticus (House cricket).